Reading from the N-terminus, the 879-residue chain is Pyruvate dehydrogenase phosphatase regulatory subunit, mitochondrial (879 aa).

A mitochondrion-targeting transit peptide spans 1 to 27; sequence MMFYRLLSIVGRQRASPGWQNWSSARN.

The protein belongs to the GcvT family. In terms of assembly, heterodimer of a catalytic (PDP1) and a regulatory (PDPR) subunit.

Its subcellular location is the mitochondrion matrix. In terms of biological role, decreases the sensitivity of PDP1 to magnesium ions, and this inhibition is reversed by the polyamine spermine. The chain is Pyruvate dehydrogenase phosphatase regulatory subunit, mitochondrial (PDPR) from Homo sapiens (Human).